The chain runs to 311 residues: Ribosomal RNA small subunit methyltransferase H (311 aa).

Residues 35–37 (GGH), D55, F80, D102, and Q109 each bind S-adenosyl-L-methionine.

It belongs to the methyltransferase superfamily. RsmH family.

The protein resides in the cytoplasm. The catalysed reaction is cytidine(1402) in 16S rRNA + S-adenosyl-L-methionine = N(4)-methylcytidine(1402) in 16S rRNA + S-adenosyl-L-homocysteine + H(+). Functionally, specifically methylates the N4 position of cytidine in position 1402 (C1402) of 16S rRNA. The chain is Ribosomal RNA small subunit methyltransferase H from Pseudoalteromonas atlantica (strain T6c / ATCC BAA-1087).